The sequence spans 269 residues: Staphylococcal secretory antigen ssaA2 (269 aa).

A signal peptide spans 1-27 (MKKIATATIATAGFATIAIASGNQAHA). 7 repeat units span residues 83 to 85 (YNN), 88 to 90 (YNN), 91 to 93 (YNN), 97 to 99 (YNN), 103 to 105 (YNN), 106 to 108 (YSN), and 115 to 117 (YNN). Residues 83–115 (YNNYSYNNYNNGYSYNNYSRYNNYSNNNQSYNY) are 7 X 3 AA repeats of Y-[NS]-N. The region spanning 148–269 (MAPSSNGRSI…SQAAGYNFIH (122 aa)) is the Peptidase C51 domain.

It localises to the secreted. Its function is as follows. Not known; immunogenic protein. In Staphylococcus aureus (strain MRSA252), this protein is Staphylococcal secretory antigen ssaA2 (ssaA2).